The chain runs to 210 residues: Mitochondrial coenzyme A diphosphatase NUDT8 (210 aa).

Residues 25–172 (LRSRPAAAAV…HFSYTLPVFL (148 aa)) form the Nudix hydrolase domain. Lys-70 carries the post-translational modification N6-succinyllysine. The short motif at 70–91 (KCDPDDQDVIHTALRETQEELG) is the Nudix box element. Mg(2+)-binding residues include Glu-85 and Glu-89. Lys-96 carries the post-translational modification N6-succinyllysine.

Belongs to the Nudix hydrolase family. In terms of assembly, monomer. Mg(2+) serves as cofactor. It depends on Mn(2+) as a cofactor. As to expression, expressed at the highest levels in the kidneys, heart, brown adipose tissue and liver (at protein level). Expressed at lower levels in the brain, skeletal muscle, and white adipose tissue (at protein level).

Its subcellular location is the mitochondrion. It catalyses the reaction an acyl-CoA + H2O = an acyl-4'-phosphopantetheine + adenosine 3',5'-bisphosphate + 2 H(+). It carries out the reaction CoA + H2O = (R)-4'-phosphopantetheine + adenosine 3',5'-bisphosphate + 2 H(+). The enzyme catalyses acetyl-CoA + H2O = S-acetyl-4'-phosphopantetheine + adenosine 3',5'-bisphosphate + 2 H(+). The catalysed reaction is butanoyl-CoA + H2O = S-butanoyl-4'-phosphopantetheine + adenosine 3',5'-bisphosphate + 2 H(+). It catalyses the reaction hexanoyl-CoA + H2O = hexanoyl-4'-phosphopantetheine + adenosine 3',5'-bisphosphate + 2 H(+). It carries out the reaction octanoyl-CoA + H2O = S-octanoyl-4'-phosphopantetheine + adenosine 3',5'-bisphosphate + 2 H(+). The enzyme catalyses propanoyl-CoA + H2O = propanoyl-4'-phosphopantetheine + adenosine 3',5'-bisphosphate + 2 H(+). The catalysed reaction is malonyl-CoA + H2O = malonyl-4'-phosphopantetheine + adenosine 3',5'-bisphosphate + 2 H(+). It catalyses the reaction succinyl-CoA + H2O = succinyl-4'-phosphopantetheine + adenosine 3',5'-bisphosphate + 2 H(+). It carries out the reaction a 5'-end CoA-ribonucleoside in mRNA + H2O = a 5'-end phospho-adenosine-phospho-ribonucleoside in mRNA + (R)-4'-phosphopantetheine + 2 H(+). Acyl-CoA diphosphatase that mediates the hydrolysis of a wide range of CoA and CoA esters yielding 3',5'-ADP and the corresponding 4'-phosphopantetheine derivative as products. Hydrolyzes short- and medium-chain acyl-CoAs, exhibiting the highest activity toward free CoA, hexanoyl-CoA, and octanoyl-CoA and the lowest activity against acetyl-CoA. Exhibits decapping activity towards dpCoA-capped RNAs in vitro. The protein is Mitochondrial coenzyme A diphosphatase NUDT8 (Nudt8) of Mus musculus (Mouse).